A 962-amino-acid polypeptide reads, in one-letter code: Phosphatidylinositol 3,4,5-trisphosphate 3-phosphatase and dual-specificity protein phosphatase daf-18 (962 aa).

Residues 1 to 37 (MVTPPPDVPSTSTRSMARDLQENPNRQPGEPRVSEPY) form a disordered region. Positions 58–230 (CRTEYQNIDL…YYYHKLRERE (173 aa)) constitute a Phosphatase tensin-type domain. Cys169 (phosphocysteine intermediate) is an active-site residue. The region spanning 234–530 (LPLRMQLIGV…GMKLHVVLRC (297 aa)) is the C2 tensin-type domain. Disordered regions lie at residues 382-416 (DTSI…WQIV) and 689-731 (IENT…RLPD). Over residues 392–403 (RRNETPMRKIDP) the composition is skewed to basic and acidic residues. Positions 692–704 (TGPSTSGSSAPGT) are enriched in low complexity. Positions 706-720 (KKTEASQSDKVKPAT) are enriched in basic and acidic residues.

This sequence belongs to the PTEN phosphatase protein family. Interacts (via C-terminus) with vab-1 (via kinase domain); the interaction is independent of vab-1 kinase activity. Interacts with arr-1 and mpz-1; the interaction may inhibit daf-18. Interacts (via C-terminus) with daf-2 (via kinase domain). Phosphorylated by vab-1 on tyrosine residues which may promote daf-18 degradation. Expressed in embryo, larvae and in adult germline (at protein level). Expressed at equal levels in the 6 vulva precursor cells (VPCs) of L2 larvae and in the descendant cells of the induced VPCs (at protein level). Expressed in the uterus (at protein level). Expressed in the Z2/Z3 germline precursors, oocytes, several amphid neurons and weakly in the nerve cord (at protein level).

The protein resides in the perikaryon. The protein localises to the cell membrane. Its subcellular location is the cell projection. It is found in the axon. It localises to the dendrite. The protein resides in the cytoplasm. The protein localises to the nucleus. It carries out the reaction a 1,2-diacyl-sn-glycero-3-phospho-(1D-myo-inositol-3,4,5-trisphosphate) + H2O = a 1,2-diacyl-sn-glycero-3-phospho-(1D-myo-inositol-4,5-bisphosphate) + phosphate. It catalyses the reaction O-phospho-L-seryl-[protein] + H2O = L-seryl-[protein] + phosphate. The enzyme catalyses O-phospho-L-threonyl-[protein] + H2O = L-threonyl-[protein] + phosphate. The catalysed reaction is O-phospho-L-tyrosyl-[protein] + H2O = L-tyrosyl-[protein] + phosphate. It carries out the reaction 1,2-dioctanoyl-sn-glycero-3-phospho-(1D-myo-inositol-3,4,5-trisphosphate) + H2O = 1,2-dioctanoyl-sn-glycero-3-phospho-(1D-myo-inositol-4,5-bisphosphate) + phosphate. It catalyses the reaction 1,2-dihexadecanoyl-sn-glycero-3-phospho-(1D-myo-inositol-3,4,5-trisphosphate) + H2O = 1,2-dihexadecanoyl-sn-glycero-3-phospho-(1D-myo-inositol-4,5-bisphosphate) + phosphate. Functionally, acts as a dual-specificity protein phosphatase, dephosphorylating tyrosine-, serine- and threonine-phosphorylated proteins. Also acts as a lipid phosphatase, removing the phosphate in the D3 position of the inositol ring from phosphatidylinositol 3,4,5-trisphosphate. By dephosphorylating PtdIns(3,4,5)P3 antagonizes PtdIns(3,4,5)P3 production by age-1/PI3K and thus, negatively regulates daf-2-mediated processes including dauer formation, longevity, fat metabolism, chemotaxis towards salt, thermotolerance and axon guidance. Similarly, promotes apoptosis during embryonic development by suppressing the recruitment of the prosurvival kinases akt-1/2 to the plasma membrane. In addition, regulates Z2/Z3 germline precursor cell cycle by maintaining them arrested at the G2 stage and by controlling their growth during L1 diapause. After sperm depletion in larvae and adult hermaphrodites, promotes germline stem cell quiescence and oocyte accumulation. By dephosphorylating ephrin-like receptor vab-1 on tyrosine residues, negatively regulates oocyte maturation downstream of vab-1 and upstream of mpk-1, independently of daf-2. Plays a role in postembryonic muscle arm extensions. Required for neurite outgrowth during AIY interneuron embryonic development. Mainly independently of daf-2, negatively regulates vulva induction probably by inhibiting mpk-1 phosphorylation. Both lipid and protein phosphatase activities are required for the regulation of vulva induction. Plays a role in gonad and germline development following the L1 diapause. The polypeptide is Phosphatidylinositol 3,4,5-trisphosphate 3-phosphatase and dual-specificity protein phosphatase daf-18 (Caenorhabditis elegans).